The following is a 670-amino-acid chain: Protein-glutamine gamma-glutamyltransferase 4 (670 aa).

2 N-linked (GlcNAc...) asparagine glycosylation sites follow: asparagine 151 and asparagine 219. Cysteine 255 is an active-site residue. An N-linked (GlcNAc...) asparagine glycan is attached at asparagine 288. Catalysis depends on residues histidine 314 and aspartate 337. Asparagine 377, aspartate 379, glutamate 429, and glutamate 434 together coordinate Ca(2+). N-linked (GlcNAc...) asparagine glycosylation is found at asparagine 456 and asparagine 491.

Belongs to the transglutaminase superfamily. Transglutaminase family. Homodimer. Ca(2+) serves as cofactor. As to expression, expressed in the coagulating gland and in the dorsal part of the prostate. Not expressed in the brain, heart, kidney, liver, lung, muscle, pancreas, spleen, stomach, testis and thymus.

The protein resides in the secreted. The enzyme catalyses L-glutaminyl-[protein] + L-lysyl-[protein] = [protein]-L-lysyl-N(6)-5-L-glutamyl-[protein] + NH4(+). In terms of biological role, associated with the mammalian reproductive process. Plays an important role in the formation of the seminal coagulum through the cross-linking of specific proteins present in the seminal plasma. Transglutaminase is also required to stabilize the copulatory plug. The polypeptide is Protein-glutamine gamma-glutamyltransferase 4 (Mus musculus (Mouse)).